The chain runs to 779 residues: Phosphoribosylformylglycinamidine synthase subunit PurL (779 aa).

H52 is a catalytic residue. 2 residues coordinate ATP: Y55 and K94. E96 provides a ligand contact to Mg(2+). Substrate is bound by residues 97 to 100 and R119; that span reads SHNH. H98 serves as the catalytic Proton acceptor. Position 120 (D120) interacts with Mg(2+). Q243 is a binding site for substrate. D271 lines the Mg(2+) pocket. Residue 315-317 participates in substrate binding; sequence ESQ. Residues N523 and G560 each contribute to the ATP site. N561 contacts Mg(2+). S563 is a substrate binding site.

The protein belongs to the FGAMS family. In terms of assembly, monomer. Part of the FGAM synthase complex composed of 1 PurL, 1 PurQ and 2 PurS subunits.

It is found in the cytoplasm. It carries out the reaction N(2)-formyl-N(1)-(5-phospho-beta-D-ribosyl)glycinamide + L-glutamine + ATP + H2O = 2-formamido-N(1)-(5-O-phospho-beta-D-ribosyl)acetamidine + L-glutamate + ADP + phosphate + H(+). Its pathway is purine metabolism; IMP biosynthesis via de novo pathway; 5-amino-1-(5-phospho-D-ribosyl)imidazole from N(2)-formyl-N(1)-(5-phospho-D-ribosyl)glycinamide: step 1/2. Functionally, part of the phosphoribosylformylglycinamidine synthase complex involved in the purines biosynthetic pathway. Catalyzes the ATP-dependent conversion of formylglycinamide ribonucleotide (FGAR) and glutamine to yield formylglycinamidine ribonucleotide (FGAM) and glutamate. The FGAM synthase complex is composed of three subunits. PurQ produces an ammonia molecule by converting glutamine to glutamate. PurL transfers the ammonia molecule to FGAR to form FGAM in an ATP-dependent manner. PurS interacts with PurQ and PurL and is thought to assist in the transfer of the ammonia molecule from PurQ to PurL. The protein is Phosphoribosylformylglycinamidine synthase subunit PurL of Prochlorococcus marinus subsp. pastoris (strain CCMP1986 / NIES-2087 / MED4).